The following is a 117-amino-acid chain: Mitochondrial zinc maintenance protein 1, mitochondrial (117 aa).

A mitochondrion-targeting transit peptide spans 1–10; it reads MSSVLSAYRN. The segment at 98 to 117 is disordered; sequence RKEMGSLAGKKGSSIKSCND.

The protein belongs to the complex I LYR family. MZM1 subfamily. Interacts with RIP1.

The protein resides in the mitochondrion matrix. Its function is as follows. Assembly factor required for Rieske Fe-S protein RIP1 incorporation into the cytochrome b-c1 (CIII) complex. Functions as a chaperone, binding to this subunit within the mitochondrial matrix and stabilizing it prior to its translocation and insertion into the late CIII dimeric intermediate within the mitochondrial inner membrane. Modulates the mitochondrial matrix zinc pool. This chain is Mitochondrial zinc maintenance protein 1, mitochondrial (MZM1), found in Candida albicans (strain SC5314 / ATCC MYA-2876) (Yeast).